We begin with the raw amino-acid sequence, 137 residues long: Large ribosomal subunit protein uL16 (137 aa).

The protein belongs to the universal ribosomal protein uL16 family. In terms of assembly, part of the 50S ribosomal subunit.

In terms of biological role, binds 23S rRNA and is also seen to make contacts with the A and possibly P site tRNAs. The chain is Large ribosomal subunit protein uL16 from Methylobacterium sp. (strain 4-46).